Reading from the N-terminus, the 230-residue chain is Sugar fermentation stimulation protein homolog (230 aa).

This sequence belongs to the SfsA family.

The protein is Sugar fermentation stimulation protein homolog of Thermoanaerobacter pseudethanolicus (strain ATCC 33223 / 39E) (Clostridium thermohydrosulfuricum).